The following is a 107-amino-acid chain: RNA silencing suppressor (107 aa).

The segment at 46–49 (RRRR) is basic. The C4-type zinc-finger motif lies at 56–78 (CHRCYRVYPPLFPEISRCDNRTC).

Belongs to the carlaviruses nucleic acid-binding protein family.

Its function is as follows. Suppressor of viral-induced RNA silencing. The potential mechanism of action is based on sequestering siRNAs. The sequence is that of RNA silencing suppressor from Chrysanthemum morifolium (Florist's daisy).